Consider the following 252-residue polypeptide: 2-succinyl-6-hydroxy-2,4-cyclohexadiene-1-carboxylate synthase (252 aa).

It belongs to the AB hydrolase superfamily. MenH family. Monomer.

The enzyme catalyses 5-enolpyruvoyl-6-hydroxy-2-succinyl-cyclohex-3-ene-1-carboxylate = (1R,6R)-6-hydroxy-2-succinyl-cyclohexa-2,4-diene-1-carboxylate + pyruvate. Its pathway is quinol/quinone metabolism; 1,4-dihydroxy-2-naphthoate biosynthesis; 1,4-dihydroxy-2-naphthoate from chorismate: step 3/7. It participates in quinol/quinone metabolism; menaquinone biosynthesis. In terms of biological role, catalyzes a proton abstraction reaction that results in 2,5-elimination of pyruvate from 2-succinyl-5-enolpyruvyl-6-hydroxy-3-cyclohexene-1-carboxylate (SEPHCHC) and the formation of 2-succinyl-6-hydroxy-2,4-cyclohexadiene-1-carboxylate (SHCHC). In Salmonella paratyphi B (strain ATCC BAA-1250 / SPB7), this protein is 2-succinyl-6-hydroxy-2,4-cyclohexadiene-1-carboxylate synthase.